The following is a 247-amino-acid chain: Orotidine 5'-phosphate decarboxylase (247 aa).

Residues Asp21, Lys43, 70 to 79, Thr129, Arg190, Gln199, Gly219, and Arg220 each bind substrate; that span reads DMKFHDIPNT. The active-site Proton donor is Lys72.

Belongs to the OMP decarboxylase family. Type 1 subfamily. In terms of assembly, homodimer.

It carries out the reaction orotidine 5'-phosphate + H(+) = UMP + CO2. Its pathway is pyrimidine metabolism; UMP biosynthesis via de novo pathway; UMP from orotate: step 2/2. Functionally, catalyzes the decarboxylation of orotidine 5'-monophosphate (OMP) to uridine 5'-monophosphate (UMP). This chain is Orotidine 5'-phosphate decarboxylase, found in Chromobacterium violaceum (strain ATCC 12472 / DSM 30191 / JCM 1249 / CCUG 213 / NBRC 12614 / NCIMB 9131 / NCTC 9757 / MK).